Here is a 334-residue protein sequence, read N- to C-terminus: Serine/Arginine-related protein 53 (334 aa).

Positions 1–13 are enriched in basic and acidic residues; it reads MGRRSSDTEEESR. Disordered regions lie at residues 1-173, 201-222, and 241-290; these read MGRR…IKAG, LKAK…QATL, and VQQT…SIPT. Positions 14–24 are enriched in basic residues; it reads SKRKKKHRRRS. Positions 44–62 are enriched in basic and acidic residues; it reads PRSESRSWSRDRQPRSHSY. Residues 78 to 118 are compositionally biased toward basic residues; the sequence is SRRKRSRSRSRGRGKSYRVQRSRSKSRTRRSRSRPRPRSHS. 3 stretches are compositionally biased toward basic and acidic residues: residues 132 to 166, 201 to 218, and 247 to 262; these read RSRD…KRGD, LKAK…KEED, and SSKD…EVKH. A coiled-coil region spans residues 180–234; the sequence is AEQAKARLQLVLEAAAKADEALKAKERNEEEAKRRKEEDQATLGEQVKRVKEIEA.

As to quaternary structure, interacts (via Arg/Ser-rich domain) with LUC7L3, RBM39 and RSF1. Post-translationally, phosphorylated.

The protein resides in the nucleus speckle. It is found in the nucleus. The protein localises to the cytoplasm. Functionally, plays a role in pre-mRNA splicing. Involved in both constitutive and alternative pre-mRNA splicing. May have a role in the recognition of the 3' splice site during the second step of splicing. In Rattus norvegicus (Rat), this protein is Serine/Arginine-related protein 53 (Rsrc1).